The chain runs to 366 residues: NADH-quinone oxidoreductase subunit D (366 aa).

The protein belongs to the complex I 49 kDa subunit family. NDH-1 is composed of 14 different subunits. Subunits NuoB, C, D, E, F, and G constitute the peripheral sector of the complex.

It localises to the cell membrane. It catalyses the reaction a quinone + NADH + 5 H(+)(in) = a quinol + NAD(+) + 4 H(+)(out). Its function is as follows. NDH-1 shuttles electrons from NADH, via FMN and iron-sulfur (Fe-S) centers, to quinones in the respiratory chain. The immediate electron acceptor for the enzyme in this species is believed to be a menaquinone. Couples the redox reaction to proton translocation (for every two electrons transferred, four hydrogen ions are translocated across the cytoplasmic membrane), and thus conserves the redox energy in a proton gradient. The polypeptide is NADH-quinone oxidoreductase subunit D (Bacillus thuringiensis (strain Al Hakam)).